The sequence spans 329 residues: 4-hydroxythreonine-4-phosphate dehydrogenase (329 aa).

2 residues coordinate substrate: histidine 136 and threonine 137. Residues histidine 166, histidine 211, and histidine 266 each contribute to the a divalent metal cation site. The substrate site is built by lysine 274, asparagine 283, and arginine 292.

Belongs to the PdxA family. Homodimer. The cofactor is Zn(2+). Mg(2+) serves as cofactor. Co(2+) is required as a cofactor.

It is found in the cytoplasm. It carries out the reaction 4-(phosphooxy)-L-threonine + NAD(+) = 3-amino-2-oxopropyl phosphate + CO2 + NADH. Its pathway is cofactor biosynthesis; pyridoxine 5'-phosphate biosynthesis; pyridoxine 5'-phosphate from D-erythrose 4-phosphate: step 4/5. In terms of biological role, catalyzes the NAD(P)-dependent oxidation of 4-(phosphooxy)-L-threonine (HTP) into 2-amino-3-oxo-4-(phosphooxy)butyric acid which spontaneously decarboxylates to form 3-amino-2-oxopropyl phosphate (AHAP). In Shigella dysenteriae serotype 1 (strain Sd197), this protein is 4-hydroxythreonine-4-phosphate dehydrogenase.